Here is a 318-residue protein sequence, read N- to C-terminus: Protoheme IX farnesyltransferase (318 aa).

The next 9 membrane-spanning stretches (helical) occupy residues 29–49 (IIPL…QGQV), 51–71 (PVLL…AQTI), 102–122 (LIFA…FANL), 123–143 (LAAS…THWL), 151–171 (IVIG…AVTG), 179–199 (LIFA…ALMI), 219–239 (ATVK…LLLV), 241–261 (PLHS…AVFI), and 280–300 (LFLY…IDSL).

Belongs to the UbiA prenyltransferase family. Protoheme IX farnesyltransferase subfamily.

Its subcellular location is the cell inner membrane. It catalyses the reaction heme b + (2E,6E)-farnesyl diphosphate + H2O = Fe(II)-heme o + diphosphate. Its pathway is porphyrin-containing compound metabolism; heme O biosynthesis; heme O from protoheme: step 1/1. Converts heme B (protoheme IX) to heme O by substitution of the vinyl group on carbon 2 of heme B porphyrin ring with a hydroxyethyl farnesyl side group. The polypeptide is Protoheme IX farnesyltransferase (Trichormus variabilis (strain ATCC 29413 / PCC 7937) (Anabaena variabilis)).